A 467-amino-acid chain; its full sequence is Chromosomal replication initiator protein DnaA (467 aa).

The segment at 1-80 (MTSELWHQCL…APRISLKIGS (80 aa)) is domain I, interacts with DnaA modulators. The interval 80-130 (SITGNSKGQQASKDSAVGATRTTAPSRPVIADVAPSGERNVTVEGAIKHES) is domain II. The segment at 131–347 (YLNPTFTFET…GALKLVIANA (217 aa)) is domain III, AAA+ region. The ATP site is built by G175, G177, K178, and T179. The interval 348 to 467 (HFTGQEITPA…YQNFMRMLTS (120 aa)) is domain IV, binds dsDNA.

The protein belongs to the DnaA family. In terms of assembly, oligomerizes as a right-handed, spiral filament on DNA at oriC.

The protein resides in the cytoplasm. In terms of biological role, plays an essential role in the initiation and regulation of chromosomal replication. ATP-DnaA binds to the origin of replication (oriC) to initiate formation of the DNA replication initiation complex once per cell cycle. Binds the DnaA box (a 9 base pair repeat at the origin) and separates the double-stranded (ds)DNA. Forms a right-handed helical filament on oriC DNA; dsDNA binds to the exterior of the filament while single-stranded (ss)DNA is stabiized in the filament's interior. The ATP-DnaA-oriC complex binds and stabilizes one strand of the AT-rich DNA unwinding element (DUE), permitting loading of DNA polymerase. After initiation quickly degrades to an ADP-DnaA complex that is not apt for DNA replication. Binds acidic phospholipids. This chain is Chromosomal replication initiator protein DnaA, found in Hahella chejuensis (strain KCTC 2396).